The primary structure comprises 233 residues: uncharacterized protein (233 aa).

A run of 3 helical transmembrane segments spans residues phenylalanine 78–tyrosine 98, phenylalanine 113–leucine 133, and phenylalanine 188–isoleucine 208.

It localises to the membrane. This is an uncharacterized protein from Saccharomyces cerevisiae (strain ATCC 204508 / S288c) (Baker's yeast).